Reading from the N-terminus, the 450-residue chain is Succinate-semialdehyde dehydrogenase (450 aa).

119-120 (WN) contributes to the NADP(+) binding site. R128 serves as a coordination point for substrate. Residues 143 to 146 (KPAK) and 197 to 198 (GS) each bind NADP(+). E219 acts as the Proton acceptor in catalysis. L220 provides a ligand contact to NADP(+). Substrate-binding residues include R247 and C253. Residue C253 is the Nucleophile of the active site. E350 lines the NADP(+) pocket. S410 contacts substrate.

This sequence belongs to the aldehyde dehydrogenase family. In terms of assembly, homodimer.

The enzyme catalyses succinate semialdehyde + NAD(+) + H2O = succinate + NADH + 2 H(+). It catalyses the reaction succinate semialdehyde + NADP(+) + H2O = succinate + NADPH + 2 H(+). The protein operates within alkaloid degradation; nicotine degradation. Catalyzes the NAD(P)(+)-dependent oxidation of succinate semialdehyde to succinate, which may enter the citric acid cycle. Is involved in the catabolism of 4-methylaminobutanoate produced from nicotine. Acts preferentially with NADP(+) as cosubstrate but can also use NAD(+). To a lesser extent, is active also towards butyraldehyde (8.5% of the activity observed with succinate semialdehyde) and propionaldehyde (1.6% of the activity observed with succinate semialdehyde) as substrates. The chain is Succinate-semialdehyde dehydrogenase (sad) from Paenarthrobacter nicotinovorans (Arthrobacter nicotinovorans).